A 145-amino-acid chain; its full sequence is Photosystem I reaction center subunit VI-2, chloroplastic (145 aa).

The transit peptide at 1 to 50 (MASFATIAAVQPSAAVKGLGGSSLAGAKLFIKPSRQSFKTKSTRAGAVVA) directs the protein to the chloroplast. Residues 102 to 118 (LLLKFLILGGGSLLTYV) traverse the membrane as a helical segment. A disordered region spans residues 126–145 (VLPIKRGPQEPPKLGPRGKL).

It belongs to the psaH family.

It is found in the plastid. The protein resides in the chloroplast thylakoid membrane. In terms of biological role, possible role could be the docking of the LHC I antenna complex to the core complex. The polypeptide is Photosystem I reaction center subunit VI-2, chloroplastic (PSAH2) (Arabidopsis thaliana (Mouse-ear cress)).